The primary structure comprises 201 residues: IMP cyclohydrolase (201 aa).

Belongs to the archaeal IMP cyclohydrolase family.

It catalyses the reaction IMP + H2O = 5-formamido-1-(5-phospho-D-ribosyl)imidazole-4-carboxamide. The protein operates within purine metabolism; IMP biosynthesis via de novo pathway; IMP from 5-formamido-1-(5-phospho-D-ribosyl)imidazole-4-carboxamide: step 1/1. In terms of biological role, catalyzes the cyclization of 5-formylamidoimidazole-4-carboxamide ribonucleotide to IMP. In Methanocella arvoryzae (strain DSM 22066 / NBRC 105507 / MRE50), this protein is IMP cyclohydrolase.